The sequence spans 251 residues: uncharacterized protein (251 aa).

The Response regulatory domain maps to 3 to 118; sequence KVIICDDERI…QLEHILDILV (116 aa). The residue at position 55 (D55) is a 4-aspartylphosphate. The HTH araC/xylS-type domain maps to 152-249; it reads NQILSQIKQH…HMSPSDYNKQ (98 aa). 2 consecutive DNA-binding regions (H-T-H motif) follow at residues 169-190 and 216-239; these read LDLI…KEHV and HYEI…KKYL.

Phosphorylated by SERP2405.

The protein resides in the cytoplasm. In terms of biological role, probable member of the two-component regulatory system SERP2405/SERP2406. This is an uncharacterized protein from Staphylococcus epidermidis (strain ATCC 35984 / DSM 28319 / BCRC 17069 / CCUG 31568 / BM 3577 / RP62A).